Here is a 398-residue protein sequence, read N- to C-terminus: Protein trichome birefringence-like 45 (398 aa).

Residues 1-21 (MAAVQCLTFLFLFLLQNATSA) form a helical; Signal-anchor for type II membrane protein membrane-spanning segment. The GDS motif signature appears at 131–133 (GDS). The DCXHWCLPGXXDXWN motif signature appears at 375–389 (DCSHWCLPGLPDTWN).

The protein belongs to the PC-esterase family. TBL subfamily.

The protein localises to the membrane. In terms of biological role, may act as a bridging protein that binds pectin and other cell wall polysaccharides. Probably involved in maintaining esterification of pectins. May be involved in the specific O-acetylation of cell wall polymers. The sequence is that of Protein trichome birefringence-like 45 (TBL45) from Arabidopsis thaliana (Mouse-ear cress).